Here is a 221-residue protein sequence, read N- to C-terminus: Iron-sulfur cluster repair protein YtfE (221 aa).

The protein belongs to the RIC family. YtfE subfamily. As to quaternary structure, homodimer.

The protein localises to the cytoplasm. In terms of biological role, di-iron-containing protein involved in the repair of iron-sulfur clusters damaged by oxidative and nitrosative stress conditions. The sequence is that of Iron-sulfur cluster repair protein YtfE from Dickeya chrysanthemi (strain Ech1591) (Dickeya zeae (strain Ech1591)).